The primary structure comprises 346 residues: Transcription initiation factor TFIID subunit 11 (346 aa).

The 199-residue stretch at 131–329 (LDKDQTNRFE…RLYRLQSDTL (199 aa)) folds into the Histone-fold domain. Phosphoserine occurs at positions 236 and 238.

Belongs to the TAF11 family. As to quaternary structure, TAF11 heterodimerizes with TAF13, but they do not seem to form a heterotetramer like TAF6/TAF9. The 1.2 MDa TFIID complex is composed of TATA binding protein (TBP) and the 14 TBP-associated factors (one copy of each TAF1, TAF2, TAF3, TAF7, TAF8, TAF11, TAF13, two copies of each TAF4, TAF5, TAF6, TAF9, TAF10, TAF12, and three copies of TAF14), ranging in size from 17 to 150 kDa.

Its subcellular location is the nucleus. Functions as a component of the DNA-binding general transcription factor complex TFIID. Binding of TFIID to a promoter (with or without TATA element) is the initial step in pre-initiation complex (PIC) formation. TFIID plays a key role in the regulation of gene expression by RNA polymerase II through different activities such as transcription activator interaction, core promoter recognition and selectivity, TFIIA and TFIIB interaction, chromatin modification (histone acetylation by TAF1), facilitation of DNA opening and initiation of transcription. In Saccharomyces cerevisiae (strain ATCC 204508 / S288c) (Baker's yeast), this protein is Transcription initiation factor TFIID subunit 11 (TAF11).